The following is a 733-amino-acid chain: DNA repair and recombination protein RAD54-like (733 aa).

The segment at 1–35 (LAKRKAGGEEEDGEWRPPATQKRQKAGSEAESADC) is disordered. One can recognise a Helicase ATP-binding domain in the interval 159-334 (SRRIPGSHGC…FSLVHFVNSG (176 aa)). Residue 172–179 (DEMGLGKT) coordinates ATP. The short motif at 285–288 (DEGH) is the DEGH box element. A Helicase C-terminal domain is found at 488–642 (LVLDYILAVT…CVVDEEQDVE (155 aa)). Lys-504 carries the post-translational modification N6-acetyllysine. Ser-561 is subject to Phosphoserine; by NEK1.

It belongs to the SNF2/RAD54 helicase family. As to quaternary structure, homohexamer. Interacts (via N-terminus) with RAD51. Interacts with NAP1L1. Interacts with BRD9; this interaction orchestrates RAD51-RAD54 complex formation. In terms of processing, acetylated. Acetylation promotes interaction with BRD9, and subsequently with RAD54, which is essential for homologous recombination (HR). Phosphorylated. Phosphorylation at Ser-561 by NEK1 specifically in G2 phase allows efficient removal of RAD51 filaments from DNA. Highly expressed in bursa, thymus, testis, and ovary. Low level of expression seen in all other organs tested.

It is found in the nucleus. Functionally, plays an essential role in homologous recombination (HR) which is a major pathway for repairing DNA double-strand breaks (DSBs), single-stranded DNA (ssDNA) gaps, and stalled or collapsed replication forks. Acts as a molecular motor during the homology search and guides RAD51 ssDNA along a donor dsDNA thereby changing the homology search from the diffusion-based mechanism to a motor-guided mechanism. Plays also an essential role in RAD51-mediated synaptic complex formation which consists of three strands encased in a protein filament formed once homology is recognized. Once DNA strand exchange occured, dissociates RAD51 from nucleoprotein filaments formed on dsDNA. The sequence is that of DNA repair and recombination protein RAD54-like (RAD54L) from Gallus gallus (Chicken).